Reading from the N-terminus, the 332-residue chain is Putative peptide import ATP-binding protein BruAb2_1033 (332 aa).

The region spanning 11–261 (LEVSNLSVDF…PLHPYTEGLL (251 aa)) is the ABC transporter domain. 47-54 (GESGSGKS) is an ATP binding site.

The protein belongs to the ABC transporter superfamily. In terms of assembly, the complex is composed of two ATP-binding proteins (BruAb2_1033 and BruAb2_1034), two transmembrane proteins (BruAb2_1031 and BruAb2_1032) and a solute-binding protein (BruAb2_1030).

It localises to the cell inner membrane. Probably part of an ABC transporter complex that could be involved in peptide import. Probably responsible for energy coupling to the transport system. In Brucella abortus biovar 1 (strain 9-941), this protein is Putative peptide import ATP-binding protein BruAb2_1033.